A 236-amino-acid chain; its full sequence is Purine nucleoside phosphorylase DeoD-type 1 (236 aa).

Position 5 (H5) interacts with a purine D-ribonucleoside. Phosphate-binding positions include G21, R25, R44, and 88–91 (RVGS). Residues 180-182 (EME) and 204-205 (TD) contribute to the a purine D-ribonucleoside site. D205 acts as the Proton donor in catalysis.

Belongs to the PNP/UDP phosphorylase family. In terms of assembly, homohexamer; trimer of homodimers.

It carries out the reaction a purine D-ribonucleoside + phosphate = a purine nucleobase + alpha-D-ribose 1-phosphate. The enzyme catalyses a purine 2'-deoxy-D-ribonucleoside + phosphate = a purine nucleobase + 2-deoxy-alpha-D-ribose 1-phosphate. Its function is as follows. Catalyzes the reversible phosphorolytic breakdown of the N-glycosidic bond in the beta-(deoxy)ribonucleoside molecules, with the formation of the corresponding free purine bases and pentose-1-phosphate. This Shewanella oneidensis (strain ATCC 700550 / JCM 31522 / CIP 106686 / LMG 19005 / NCIMB 14063 / MR-1) protein is Purine nucleoside phosphorylase DeoD-type 1.